A 581-amino-acid polypeptide reads, in one-letter code: Pyridine nucleotide-disulfide oxidoreductase domain-containing protein 2 (581 aa).

An FAD-binding site is contributed by 38–71 (VVIGAGHNGLVAAAYLQRLGVNTAVFERRHVIGG).

This sequence belongs to the carotenoid/retinoid oxidoreductase family. As to quaternary structure, interacts with COX5B; this interaction may contribute to localize PYROXD2 to the inner face of the inner mitochondrial membrane.

The protein localises to the mitochondrion matrix. Its function is as follows. Probable oxidoreductase that may play a role as regulator of mitochondrial function. This chain is Pyridine nucleotide-disulfide oxidoreductase domain-containing protein 2, found in Mus musculus (Mouse).